The chain runs to 478 residues: Lipoprotein lipase (478 aa).

The N-terminal stretch at Met1–Ala28 is a signal peptide. Positions Lys35–Thr56 are interaction with GPIHBP1. An intrachain disulfide couples Cys57 to Cys70. N-linked (GlcNAc...) asparagine glycosylation is present at Asn73. Position 124 is a 3'-nitrotyrosine (Tyr124). Residue Ser162 is the Nucleophile of the active site. Asp186 serves as the catalytic Charge relay system. Tyr194 carries the 3'-nitrotyrosine modification. Residues Ala197, Arg200, Ser202, and Asp205 each contribute to the Ca(2+) site. Cys246 and Cys269 form a disulfide bridge. An essential for determining substrate specificity region spans residues Cys246–Cys269. Catalysis depends on His271, which acts as the Charge relay system. A glycan (N-linked (GlcNAc...) asparagine) is linked at Asn287. Cystine bridges form between Cys294-Cys313 and Cys305-Cys308. The 124-residue stretch at Phe344–Lys467 folds into the PLAT domain. At Tyr346 the chain carries 3'-nitrotyrosine. N-linked (GlcNAc...) asparagine glycosylation occurs at Asn389. Residues Trp420–Trp424 form an important for interaction with lipoprotein particles region. Residues Lys433–Lys437 are important for heparin binding. The interval Ile446–Asp470 is interaction with GPIHBP1. The cysteines at positions 448 and 468 are disulfide-linked.

It belongs to the AB hydrolase superfamily. Lipase family. Homodimer. Interacts with GPIHBP1 with 1:1 stoichiometry. Interacts with APOC2; the interaction activates LPL activity in the presence of lipids. Interaction with heparan sulfate proteoglycans is required to protect LPL against loss of activity. Associates with lipoprotein particles in blood plasma. Interacts with LMF1 and SEL1L; interaction with SEL1L is required to prevent aggregation of newly synthesized LPL in the endoplasmic reticulum (ER), and for normal export of LPL from the ER to the extracellular space. Interacts with SORL1; SORL1 acts as a sorting receptor, promoting LPL localization to endosomes and later to lysosomes, leading to degradation of newly synthesized LPL. In terms of processing, tyrosine nitration after lipopolysaccharide (LPS) challenge down-regulates the lipase activity. In terms of tissue distribution, detected in milk (at protein level).

Its subcellular location is the cell membrane. The protein resides in the secreted. It localises to the extracellular space. It is found in the extracellular matrix. It catalyses the reaction a triacylglycerol + H2O = a diacylglycerol + a fatty acid + H(+). It carries out the reaction a 1,2-diacyl-sn-glycero-3-phosphocholine + H2O = a 2-acyl-sn-glycero-3-phosphocholine + a fatty acid + H(+). The enzyme catalyses 1,2,3-tri-(9Z-octadecenoyl)-glycerol + H2O = di-(9Z)-octadecenoylglycerol + (9Z)-octadecenoate + H(+). The catalysed reaction is 1,2-di-(9Z-octadecenoyl)-sn-glycero-3-phosphocholine + H2O = (9Z-octadecenoyl)-sn-glycero-3-phosphocholine + (9Z)-octadecenoate + H(+). It catalyses the reaction 1,2,3-tributanoylglycerol + H2O = dibutanoylglycerol + butanoate + H(+). It carries out the reaction 1,2-dihexadecanoyl-sn-glycero-3-phosphocholine + H2O = hexadecanoyl-sn-glycero-3-phosphocholine + hexadecanoate + H(+). With respect to regulation, the apolipoprotein APOC2 acts as a coactivator of LPL activity. Ca(2+) binding promotes protein stability and formation of the active homodimer. Interaction with GPIHBP1 protects LPL against inactivation by ANGPTL4. Key enzyme in triglyceride metabolism. Catalyzes the hydrolysis of triglycerides from circulating chylomicrons and very low density lipoproteins (VLDL), and thereby plays an important role in lipid clearance from the blood stream, lipid utilization and storage. Although it has both phospholipase and triglyceride lipase activities it is primarily a triglyceride lipase with low but detectable phospholipase activity. Mediates margination of triglyceride-rich lipoprotein particles in capillaries. Recruited to its site of action on the luminal surface of vascular endothelium by binding to GPIHBP1 and cell surface heparan sulfate proteoglycans. The protein is Lipoprotein lipase (LPL) of Bos taurus (Bovine).